Consider the following 340-residue polypeptide: Undecaprenyl-phosphate 4-deoxy-4-formamido-L-arabinose transferase (340 aa).

Helical transmembrane passes span 235–255 (LSIVGFAMAGLGVLFAAALIF) and 269–289 (LFVLFAVLFVFTGGQFIGMGL).

The protein belongs to the glycosyltransferase 2 family.

Its subcellular location is the cell inner membrane. It catalyses the reaction UDP-4-deoxy-4-formamido-beta-L-arabinose + di-trans,octa-cis-undecaprenyl phosphate = 4-deoxy-4-formamido-alpha-L-arabinopyranosyl di-trans,octa-cis-undecaprenyl phosphate + UDP. Its pathway is glycolipid biosynthesis; 4-amino-4-deoxy-alpha-L-arabinose undecaprenyl phosphate biosynthesis; 4-amino-4-deoxy-alpha-L-arabinose undecaprenyl phosphate from UDP-4-deoxy-4-formamido-beta-L-arabinose and undecaprenyl phosphate: step 1/2. It participates in bacterial outer membrane biogenesis; lipopolysaccharide biosynthesis. Its function is as follows. Catalyzes the transfer of 4-deoxy-4-formamido-L-arabinose from UDP to undecaprenyl phosphate. The modified arabinose is attached to lipid A and is required for resistance to polymyxin and cationic antimicrobial peptides. This Pseudomonas fluorescens (strain Pf0-1) protein is Undecaprenyl-phosphate 4-deoxy-4-formamido-L-arabinose transferase.